The following is a 182-amino-acid chain: ATP synthase subunit delta (182 aa).

It belongs to the ATPase delta chain family. F-type ATPases have 2 components, F(1) - the catalytic core - and F(0) - the membrane proton channel. F(1) has five subunits: alpha(3), beta(3), gamma(1), delta(1), epsilon(1). CF(0) has four main subunits: a(1), b(1), b'(1) and c(10-14). The alpha and beta chains form an alternating ring which encloses part of the gamma chain. F(1) is attached to F(0) by a central stalk formed by the gamma and epsilon chains, while a peripheral stalk is formed by the delta, b and b' chains.

The protein resides in the cellular thylakoid membrane. Functionally, f(1)F(0) ATP synthase produces ATP from ADP in the presence of a proton or sodium gradient. F-type ATPases consist of two structural domains, F(1) containing the extramembraneous catalytic core and F(0) containing the membrane proton channel, linked together by a central stalk and a peripheral stalk. During catalysis, ATP synthesis in the catalytic domain of F(1) is coupled via a rotary mechanism of the central stalk subunits to proton translocation. In terms of biological role, this protein is part of the stalk that links CF(0) to CF(1). It either transmits conformational changes from CF(0) to CF(1) or is implicated in proton conduction. The chain is ATP synthase subunit delta from Prochlorococcus marinus (strain MIT 9303).